The following is a 112-amino-acid chain: Cytochrome c6 (112 aa).

An N-terminal signal peptide occupies residues 1–25 (MKTLLTILALTLVTLTTWLSTPAFA). Heme c is bound by residues cysteine 39, cysteine 42, histidine 43, and methionine 83.

The protein belongs to the cytochrome c family. PetJ subfamily. As to quaternary structure, monomer. In terms of processing, binds 1 heme c group covalently per subunit.

It localises to the cellular thylakoid lumen. Its function is as follows. Functions as an electron carrier between membrane-bound cytochrome b6-f and photosystem I in oxygenic photosynthesis. The sequence is that of Cytochrome c6 from Synechococcus sp. (strain ATCC 27167 / PCC 6312).